The chain runs to 233 residues: Zinc import ATP-binding protein ZnuC (233 aa).

The ABC transporter domain maps to I6–L222. Position 38–45 (G38–T45) interacts with ATP.

Belongs to the ABC transporter superfamily. Zinc importer (TC 3.A.1.15.5) family. The complex is composed of two ATP-binding proteins (ZnuC), two transmembrane proteins (ZnuB) and a solute-binding protein (ZnuA).

It is found in the cell inner membrane. It carries out the reaction Zn(2+)(out) + ATP(in) + H2O(in) = Zn(2+)(in) + ADP(in) + phosphate(in) + H(+)(in). Its function is as follows. Part of the ABC transporter complex ZnuABC involved in zinc import. Responsible for energy coupling to the transport system. The protein is Zinc import ATP-binding protein ZnuC of Rickettsia bellii (strain RML369-C).